We begin with the raw amino-acid sequence, 574 residues long: Zinc finger protein 394 (574 aa).

S12 is modified (phosphoserine). A Glycyl lysine isopeptide (Lys-Gly) (interchain with G-Cter in SUMO2) cross-link involves residue K40. An SCAN box domain is found at 64–146; sequence RLHFRQLRYQ…AVVRALQRAL (83 aa). A KRAB domain is found at 155-230; it reads VTFEDMAVSL…LQEAFQGKHP (76 aa). Positions 182 to 202 are disordered; that stretch reads ESAQKDSGSTVPPSLESRVEN. Residues K203, K228, and K254 each participate in a glycyl lysine isopeptide (Lys-Gly) (interchain with G-Cter in SUMO2) cross-link. Residues 231 to 284 are disordered; the sequence is LFSKCGSTHEDRVEKQSGNPLPLKLENSAEAEGLNSISDVNKNGSIEGEDSKNN. Residues 265-274 are compositionally biased toward polar residues; the sequence is NSISDVNKNG. K282 participates in a covalent cross-link: Glycyl lysine isopeptide (Lys-Gly) (interchain with G-Cter in SUMO2). C2H2-type zinc fingers lie at residues 358 to 380, 386 to 408, 414 to 436, 442 to 463, 469 to 491, 497 to 519, and 525 to 547; these read YKCG…QRIH, YGCQ…QRTH, YTCL…QSTH, FKCE…QRLH, YKCE…HRIH, YGCS…QRIH, and YKCL…QRIH. A Glycyl lysine isopeptide (Lys-Gly) (interchain with G-Cter in SUMO2) cross-link involves residue K443.

Belongs to the krueppel C2H2-type zinc-finger protein family.

Its subcellular location is the nucleus. Its function is as follows. May be involved in transcriptional regulation. In Pongo abelii (Sumatran orangutan), this protein is Zinc finger protein 394 (ZNF394).